A 970-amino-acid chain; its full sequence is Translation initiation factor IF-2 (970 aa).

Disordered regions lie at residues 54–270 (KILA…TATQ) and 328–348 (DKRR…KSLS). Over residues 87-96 (QEAQPVEAQP) the composition is skewed to low complexity. Residues 98-112 (YEEQPSYEEQPSYEE) show a composition bias toward polar residues. The segment covering 121–149 (EVAAEAAPEPVEEPASSPEGGAPAGGAEP) has biased composition (low complexity). 2 stretches are compositionally biased toward pro residues: residues 150–160 (QPAPEAPPPSA) and 168–182 (PSAP…PAPS). A compositionally biased stretch (low complexity) spans 183-253 (VPAGAQPPGA…PHGPGAQPGQ (71 aa)). Residues 469-638 (IRPPVVTVMG…ALQSEVLELK (170 aa)) form the tr-type G domain. The segment at 478 to 485 (GHVDHGKT) is G1. 478–485 (GHVDHGKT) contacts GTP. A G2 region spans residues 503–507 (GITQH). Residues 524-527 (DTPG) form a G3 region. GTP is bound by residues 524–528 (DTPGH) and 578–581 (NKID). A G4 region spans residues 578-581 (NKID). The segment at 614–616 (SAR) is G5.

It belongs to the TRAFAC class translation factor GTPase superfamily. Classic translation factor GTPase family. IF-2 subfamily.

It is found in the cytoplasm. In terms of biological role, one of the essential components for the initiation of protein synthesis. Protects formylmethionyl-tRNA from spontaneous hydrolysis and promotes its binding to the 30S ribosomal subunits. Also involved in the hydrolysis of GTP during the formation of the 70S ribosomal complex. The polypeptide is Translation initiation factor IF-2 (Anaeromyxobacter sp. (strain Fw109-5)).